The following is a 240-amino-acid chain: Phosphoribosylaminoimidazole-succinocarboxamide synthase (240 aa).

This sequence belongs to the SAICAR synthetase family.

It carries out the reaction 5-amino-1-(5-phospho-D-ribosyl)imidazole-4-carboxylate + L-aspartate + ATP = (2S)-2-[5-amino-1-(5-phospho-beta-D-ribosyl)imidazole-4-carboxamido]succinate + ADP + phosphate + 2 H(+). The protein operates within purine metabolism; IMP biosynthesis via de novo pathway; 5-amino-1-(5-phospho-D-ribosyl)imidazole-4-carboxamide from 5-amino-1-(5-phospho-D-ribosyl)imidazole-4-carboxylate: step 1/2. The chain is Phosphoribosylaminoimidazole-succinocarboxamide synthase from Wolbachia pipientis wMel.